A 240-amino-acid chain; its full sequence is Phosducin-like protein 3 (240 aa).

An N-acetylmethionine modification is found at M1. The region spanning 27–181 (KELEEEEAEK…EGDIKAQFIG (155 aa)) is the Phosducin domain. S44, S65, S235, and S237 each carry phosphoserine. The segment at 92–240 (FGEVLEISGK…MRRDSDSEDD (149 aa)) is thioredoxin fold.

Belongs to the phosducin family. In terms of assembly, interacts (via thioredoxin fold region) with KDR/VEGFR2 (via juxtamembrane domain). Forms ternary complexes with the chaperonin CCT complex and actin substrate, leading to inhibition of actin folding. Interacts with XIAP (via BIR 3 and RING domain). Interacts with HSP90AA1 and HSP90AB1. N-terminal methionine acetylation destabilizes the protein. In terms of tissue distribution, expressed in blood vessels (at protein level).

It localises to the cytoplasm. The protein localises to the perinuclear region. Its subcellular location is the endoplasmic reticulum. Its function is as follows. Acts as a chaperone for the angiogenic VEGF receptor KDR/VEGFR2, increasing its abundance by inhibiting its ubiquitination and degradation. Inhibits the folding activity of the chaperonin-containing T-complex (CCT) which leads to inhibition of cytoskeletal actin folding. Acts as a chaperone during heat shock alongside HSP90 and HSP40/70 chaperone complexes. Modulates the activation of caspases during apoptosis. This Mus musculus (Mouse) protein is Phosducin-like protein 3 (Pdcl3).